The sequence spans 94 residues: Myosuppressin (94 aa).

An N-terminal signal peptide occupies residues 1–24 (MMSPTLMILISITTMAILSGESFG). Residues 25-80 (AMPAQCNSEFLEELPPRLRKICVAIARIWDAREMNDFVDDREYRENLPRYDSSVKR) constitute a propeptide that is removed on maturation. At glutamine 81 the chain carries Pyrrolidone carboxylic acid. Phenylalanine amide is present on phenylalanine 90.

As to expression, expressed throughout the nervous system (at protein level).

The protein localises to the secreted. Myoinhibiting neuropeptide. The polypeptide is Myosuppressin (Camponotus floridanus (Florida carpenter ant)).